An 80-amino-acid chain; its full sequence is UPF0154 protein SZO_03240 (80 aa).

Residues 4–24 (AIWILLIIVALTAGLFGGIFI) traverse the membrane as a helical segment.

The protein belongs to the UPF0154 family.

The protein resides in the cell membrane. The sequence is that of UPF0154 protein SZO_03240 from Streptococcus equi subsp. zooepidemicus (strain H70).